Here is a 195-residue protein sequence, read N- to C-terminus: MEIIKSNIANLPSRFGKFQIKSYKEGCCKEHLTIFSPNLDVTKTVNVRIHSECLTGDAIGSLKCDCRDQLEASLKYINKHGGMVIYLRQEGRNIGLLNKVNAYALQDNGLDTIEANHQLGFKADERTYEIVDFILKDFGIKSINLLTNNPLKLASLTCVNIEKRIPIEIESNEFNKDYLKVKKEQMGHMLDEFTR.

Residue 48-52 (RIHSE) participates in GTP binding. Residues Cys-53, Cys-64, and Cys-66 each coordinate Zn(2+). Residues Gln-69, 90–92 (EGR), and Thr-112 contribute to the GTP site. The active-site Proton acceptor is Asp-124. The active-site Nucleophile is Arg-126. Residues Thr-147 and Lys-152 each coordinate GTP.

This sequence belongs to the GTP cyclohydrolase II family. Requires Zn(2+) as cofactor.

The enzyme catalyses GTP + 4 H2O = 2,5-diamino-6-hydroxy-4-(5-phosphoribosylamino)-pyrimidine + formate + 2 phosphate + 3 H(+). It functions in the pathway cofactor biosynthesis; riboflavin biosynthesis; 5-amino-6-(D-ribitylamino)uracil from GTP: step 1/4. In terms of biological role, catalyzes the conversion of GTP to 2,5-diamino-6-ribosylamino-4(3H)-pyrimidinone 5'-phosphate (DARP), formate and pyrophosphate. This Campylobacter fetus subsp. fetus (strain 82-40) protein is GTP cyclohydrolase-2.